The following is a 141-amino-acid chain: Large ribosomal subunit protein bL17 (141 aa).

It belongs to the bacterial ribosomal protein bL17 family. Part of the 50S ribosomal subunit. Contacts protein L32.

The polypeptide is Large ribosomal subunit protein bL17 (Bartonella bacilliformis (strain ATCC 35685 / KC583 / Herrer 020/F12,63)).